The sequence spans 145 residues: D-aminoacyl-tRNA deacylase (145 aa).

The Gly-cisPro motif, important for rejection of L-amino acids signature appears at G137–P138.

The protein belongs to the DTD family. As to quaternary structure, homodimer.

It localises to the cytoplasm. It carries out the reaction glycyl-tRNA(Ala) + H2O = tRNA(Ala) + glycine + H(+). It catalyses the reaction a D-aminoacyl-tRNA + H2O = a tRNA + a D-alpha-amino acid + H(+). In terms of biological role, an aminoacyl-tRNA editing enzyme that deacylates mischarged D-aminoacyl-tRNAs. Also deacylates mischarged glycyl-tRNA(Ala), protecting cells against glycine mischarging by AlaRS. Acts via tRNA-based rather than protein-based catalysis; rejects L-amino acids rather than detecting D-amino acids in the active site. By recycling D-aminoacyl-tRNA to D-amino acids and free tRNA molecules, this enzyme counteracts the toxicity associated with the formation of D-aminoacyl-tRNA entities in vivo and helps enforce protein L-homochirality. The chain is D-aminoacyl-tRNA deacylase from Dichelobacter nodosus (strain VCS1703A).